The chain runs to 209 residues: Ribosomal RNA large subunit methyltransferase E (209 aa).

S-adenosyl-L-methionine is bound by residues Gly-63, Trp-65, Asp-83, Asp-99, and Asp-124. The active-site Proton acceptor is the Lys-164.

Belongs to the class I-like SAM-binding methyltransferase superfamily. RNA methyltransferase RlmE family.

It localises to the cytoplasm. It carries out the reaction uridine(2552) in 23S rRNA + S-adenosyl-L-methionine = 2'-O-methyluridine(2552) in 23S rRNA + S-adenosyl-L-homocysteine + H(+). Functionally, specifically methylates the uridine in position 2552 of 23S rRNA at the 2'-O position of the ribose in the fully assembled 50S ribosomal subunit. This chain is Ribosomal RNA large subunit methyltransferase E, found in Escherichia coli O81 (strain ED1a).